The following is a 245-amino-acid chain: Carboxymethylenebutenolidase homolog (245 aa).

Ala2 is modified (N-acetylalanine). Catalysis depends on residues Cys132, Asp179, and His212. A Phosphoserine modification is found at Ser223.

The protein belongs to the dienelactone hydrolase family.

The protein resides in the cytoplasm. It localises to the cytosol. Functionally, cysteine hydrolase. This Rattus norvegicus (Rat) protein is Carboxymethylenebutenolidase homolog (Cmbl).